A 262-amino-acid chain; its full sequence is Acyl-[acyl-carrier-protein]--UDP-N-acetylglucosamine O-acyltransferase (262 aa).

The protein belongs to the transferase hexapeptide repeat family. LpxA subfamily. As to quaternary structure, homotrimer.

It localises to the cytoplasm. The enzyme catalyses a (3R)-hydroxyacyl-[ACP] + UDP-N-acetyl-alpha-D-glucosamine = a UDP-3-O-[(3R)-3-hydroxyacyl]-N-acetyl-alpha-D-glucosamine + holo-[ACP]. It functions in the pathway glycolipid biosynthesis; lipid IV(A) biosynthesis; lipid IV(A) from (3R)-3-hydroxytetradecanoyl-[acyl-carrier-protein] and UDP-N-acetyl-alpha-D-glucosamine: step 1/6. In terms of biological role, involved in the biosynthesis of lipid A, a phosphorylated glycolipid that anchors the lipopolysaccharide to the outer membrane of the cell. This Salmonella typhi protein is Acyl-[acyl-carrier-protein]--UDP-N-acetylglucosamine O-acyltransferase.